A 267-amino-acid chain; its full sequence is uncharacterized protein (267 aa).

A coiled-coil region spans residues 37-62 (DSSNNYKKKYKKYKRKYIDLKKQLNY).

This is an uncharacterized protein from Acanthamoeba polyphaga (Amoeba).